Consider the following 249-residue polypeptide: 3-deoxy-manno-octulosonate cytidylyltransferase (249 aa).

This sequence belongs to the KdsB family.

It localises to the cytoplasm. It catalyses the reaction 3-deoxy-alpha-D-manno-oct-2-ulosonate + CTP = CMP-3-deoxy-beta-D-manno-octulosonate + diphosphate. The protein operates within nucleotide-sugar biosynthesis; CMP-3-deoxy-D-manno-octulosonate biosynthesis; CMP-3-deoxy-D-manno-octulosonate from 3-deoxy-D-manno-octulosonate and CTP: step 1/1. It participates in bacterial outer membrane biogenesis; lipopolysaccharide biosynthesis. Activates KDO (a required 8-carbon sugar) for incorporation into bacterial lipopolysaccharide in Gram-negative bacteria. This is 3-deoxy-manno-octulosonate cytidylyltransferase from Serratia proteamaculans (strain 568).